Here is a 165-residue protein sequence, read N- to C-terminus: Leukotoxin-activating lysine-acyltransferase LktC (165 aa).

Active-site residues include histidine 22 and aspartate 91.

This sequence belongs to the RTX toxin acyltransferase family.

Its subcellular location is the cytoplasm. The enzyme catalyses a fatty acyl-[ACP] + L-lysyl-[protein] = N(6)-(fatty acyl)-L-lysyl-[protein] + holo-[ACP] + H(+). Its function is as follows. Involved in fatty acylation of the protoxin (LktA) at two internal lysine residues, thereby converting it to the active toxin. This chain is Leukotoxin-activating lysine-acyltransferase LktC (lktC), found in Pasteurella haemolytica-like sp. (strain 5943B).